We begin with the raw amino-acid sequence, 204 residues long: NADH-ubiquinone oxidoreductase chain 6 (204 aa).

The next 5 membrane-spanning stretches (helical) occupy residues 5–25, 29–49, 56–76, 91–111, and 151–171; these read IFLF…VIGL, VHSV…LLLL, FMLI…VVMM, LWPI…SSFY, and LLFL…IVLT.

It belongs to the complex I subunit 6 family.

Its subcellular location is the mitochondrion membrane. It catalyses the reaction a ubiquinone + NADH + 5 H(+)(in) = a ubiquinol + NAD(+) + 4 H(+)(out). Its function is as follows. Core subunit of the mitochondrial membrane respiratory chain NADH dehydrogenase (Complex I) that is believed to belong to the minimal assembly required for catalysis. Complex I functions in the transfer of electrons from NADH to the respiratory chain. The immediate electron acceptor for the enzyme is believed to be ubiquinone. In Chondrus crispus (Carrageen Irish moss), this protein is NADH-ubiquinone oxidoreductase chain 6 (ND6).